A 1168-amino-acid polypeptide reads, in one-letter code: Transcription-repair-coupling factor (1168 aa).

The Helicase ATP-binding domain occupies 633-794 (DMQKSRPMDR…MLGVRDLSVI (162 aa)). 646–653 (GDVGYGKT) contributes to the ATP binding site. Residues 747 to 750 (DEEQ) carry the DEEQ box motif. The Helicase C-terminal domain maps to 808–969 (VLEQNMSFIK…GFKIAMRDLN (162 aa)).

In the N-terminal section; belongs to the UvrB family. It in the C-terminal section; belongs to the helicase family. RecG subfamily.

The protein localises to the cytoplasm. Functionally, couples transcription and DNA repair by recognizing RNA polymerase (RNAP) stalled at DNA lesions. Mediates ATP-dependent release of RNAP and its truncated transcript from the DNA, and recruitment of nucleotide excision repair machinery to the damaged site. The chain is Transcription-repair-coupling factor from Staphylococcus aureus (strain bovine RF122 / ET3-1).